Here is an 81-residue protein sequence, read N- to C-terminus: Photosystem I iron-sulfur center (81 aa).

4Fe-4S ferredoxin-type domains are found at residues 2–31 (AHSVKVYDTCIGCTQCVRACPCDVLEMVPW) and 39–68 (IASAPRTEDCIGCKRCETACPTDFLSVRVY). Residues cysteine 11, cysteine 14, cysteine 17, cysteine 21, cysteine 48, cysteine 51, cysteine 54, and cysteine 58 each coordinate [4Fe-4S] cluster.

The eukaryotic PSI reaction center is composed of at least 11 subunits. It depends on [4Fe-4S] cluster as a cofactor.

It is found in the plastid. It localises to the chloroplast thylakoid membrane. It catalyses the reaction reduced [plastocyanin] + hnu + oxidized [2Fe-2S]-[ferredoxin] = oxidized [plastocyanin] + reduced [2Fe-2S]-[ferredoxin]. Apoprotein for the two 4Fe-4S centers FA and FB of photosystem I (PSI); essential for photochemical activity. FB is the terminal electron acceptor of PSI, donating electrons to ferredoxin. The C-terminus interacts with PsaA/B/D and helps assemble the protein into the PSI complex. Required for binding of PsaD and PsaE to PSI. PSI is a plastocyanin/cytochrome c6-ferredoxin oxidoreductase, converting photonic excitation into a charge separation, which transfers an electron from the donor P700 chlorophyll pair to the spectroscopically characterized acceptors A0, A1, FX, FA and FB in turn. This is Photosystem I iron-sulfur center from Gracilaria tenuistipitata var. liui (Red alga).